Reading from the N-terminus, the 71-residue chain is Pro-MCH (71 aa).

Positions 1–20 (AKMNLSSYILILTFSLFSQG) are cleaved as a signal peptide.

It belongs to the melanin-concentrating hormone family.

The protein localises to the secreted. The chain is Pro-MCH (PMCH) from Hylobates lar (Lar gibbon).